The sequence spans 559 residues: Suppressor of tumorigenicity 7 protein-like (559 aa).

3 consecutive transmembrane segments (helical) span residues 39–59, 83–103, and 513–533; these read GLANSGSTLWFLAGLGLLYAL, FYVALTGTSSLISGLIFIFEW, and LPFFIHFTAGLCSSTAMLAFL.

This sequence belongs to the ST7 family. Ubiquitously expressed.

The protein localises to the membrane. In Mus musculus (Mouse), this protein is Suppressor of tumorigenicity 7 protein-like (St7l).